The following is a 393-amino-acid chain: Formate-dependent phosphoribosylglycinamide formyltransferase (393 aa).

N(1)-(5-phospho-beta-D-ribosyl)glycinamide is bound by residues 22–23 (EL) and Glu-82. ATP contacts are provided by residues Arg-114, Lys-155, 160–165 (SSGKGQ), 195–198 (EGFI), and Glu-203. An ATP-grasp domain is found at 119-308 (RLAAEELDLP…QFALHARAIL (190 aa)). Glu-267 and Glu-279 together coordinate Mg(2+). Residues Asp-286, Lys-356, and 363–364 (RR) each bind N(1)-(5-phospho-beta-D-ribosyl)glycinamide.

This sequence belongs to the PurK/PurT family. Homodimer.

It carries out the reaction N(1)-(5-phospho-beta-D-ribosyl)glycinamide + formate + ATP = N(2)-formyl-N(1)-(5-phospho-beta-D-ribosyl)glycinamide + ADP + phosphate + H(+). It participates in purine metabolism; IMP biosynthesis via de novo pathway; N(2)-formyl-N(1)-(5-phospho-D-ribosyl)glycinamide from N(1)-(5-phospho-D-ribosyl)glycinamide (formate route): step 1/1. Involved in the de novo purine biosynthesis. Catalyzes the transfer of formate to 5-phospho-ribosyl-glycinamide (GAR), producing 5-phospho-ribosyl-N-formylglycinamide (FGAR). Formate is provided by PurU via hydrolysis of 10-formyl-tetrahydrofolate. The protein is Formate-dependent phosphoribosylglycinamide formyltransferase of Pseudomonas entomophila (strain L48).